We begin with the raw amino-acid sequence, 209 residues long: Interleukin-6 (209 aa).

A signal peptide spans 1-26; sequence RFTSAFSPVAFSLGLLLVMATAFPTP. The disordered stretch occupies residues 28 to 47; the sequence is PVGGESQADATSNRPPLTSP. An intrachain disulfide couples cysteine 69 to cysteine 75. Serine 78 is subject to Phosphoserine. Cysteine 98 and cysteine 108 are joined by a disulfide.

Belongs to the IL-6 superfamily. As to quaternary structure, component of a hexamer of two molecules each of IL6, IL6R and IL6ST; first binds to IL6R to associate with the signaling subunit IL6ST. Interacts with IL6R (via the N-terminal ectodomain); this interaction may be affected by IL6R-binding with SORL1, hence decreasing IL6 cis signaling. Interacts with SORL1 (via the N-terminal ectodomain); this interaction leads to IL6 internalization and lysosomal degradation. May form a trimeric complex with the soluble SORL1 ectodomain and soluble IL6R receptor; this interaction might stabilize circulating IL6, hence promoting IL6 trans signaling.

The protein localises to the secreted. Cytokine with a wide variety of biological functions in immunity, tissue regeneration, and metabolism. Binds to IL6R, then the complex associates to the signaling subunit IL6ST/gp130 to trigger the intracellular IL6-signaling pathway. The interaction with the membrane-bound IL6R and IL6ST stimulates 'classic signaling', whereas the binding of IL6 and soluble IL6R to IL6ST stimulates 'trans-signaling'. Alternatively, 'cluster signaling' occurs when membrane-bound IL6:IL6R complexes on transmitter cells activate IL6ST receptors on neighboring receiver cells. In terms of biological role, IL6 is a potent inducer of the acute phase response. Rapid production of IL6 contributes to host defense during infection and tissue injury, but excessive IL6 synthesis is involved in disease pathology. In the innate immune response, is synthesized by myeloid cells, such as macrophages and dendritic cells, upon recognition of pathogens through toll-like receptors (TLRs) at the site of infection or tissue injury. In the adaptive immune response, is required for the differentiation of B cells into immunoglobulin-secreting cells. Plays a major role in the differentiation of CD4(+) T cell subsets. Essential factor for the development of T follicular helper (Tfh) cells that are required for the induction of germinal-center formation. Required to drive naive CD4(+) T cells to the Th17 lineage. Also required for proliferation of myeloma cells and the survival of plasmablast cells. Functionally, acts as an essential factor in bone homeostasis and on vessels directly or indirectly by induction of VEGF, resulting in increased angiogenesis activity and vascular permeability. Induces, through 'trans-signaling' and synergistically with IL1B and TNF, the production of VEGF. Involved in metabolic controls, is discharged into the bloodstream after muscle contraction increasing lipolysis and improving insulin resistance. 'Trans-signaling' in central nervous system also regulates energy and glucose homeostasis. Mediates, through GLP-1, crosstalk between insulin-sensitive tissues, intestinal L cells and pancreatic islets to adapt to changes in insulin demand. Also acts as a myokine. Plays a protective role during liver injury, being required for maintenance of tissue regeneration. Also has a pivotal role in iron metabolism by regulating HAMP/hepcidin expression upon inflammation or bacterial infection. Through activation of IL6ST-YAP-NOTCH pathway, induces inflammation-induced epithelial regeneration. This is Interleukin-6 (IL6) from Phoca vitulina (Harbor seal).